The primary structure comprises 984 residues: Putative formate dehydrogenase SAV2309 (984 aa).

The region spanning 3 to 79 (EHLVVTLDGK…PMTVNTVNND (77 aa)) is the 2Fe-2S ferredoxin-type domain. Positions 37, 48, 51, and 63 each coordinate [2Fe-2S] cluster. Residues 79 to 119 (DVKDAQKEALDRILEKHMLYCTVCDYNNGDCEIHNTMDAWG) enclose the 4Fe-4S His(Cys)3-ligated-type domain. [4Fe-4S] cluster contacts are provided by histidine 95, cysteine 99, cysteine 102, cysteine 109, cysteine 147, cysteine 150, cysteine 153, cysteine 157, cysteine 190, cysteine 193, cysteine 196, cysteine 200, cysteine 264, cysteine 267, cysteine 271, and cysteine 299. 2 consecutive 4Fe-4S ferredoxin-type domains span residues 138–165 (PFYR…VNET) and 181–211 (NDVP…VNME). A formate dehydrogenase region spans residues 252 to 984 (MRKERIKKTK…YVFPGNQVDK (733 aa)). The 4Fe-4S Mo/W bis-MGD-type domain maps to 257 to 313 (IKKTKTVCTYCGVGCSFEVWTKDREILKVQPSHDSPANKIVTCVKGKFSWGHINSDQ).

This sequence in the C-terminal section; belongs to the prokaryotic molybdopterin-containing oxidoreductase family. Requires [2Fe-2S] cluster as cofactor. [4Fe-4S] cluster serves as cofactor. The cofactor is Mo-bis(molybdopterin guanine dinucleotide).

It catalyses the reaction formate + NAD(+) = CO2 + NADH. This is Putative formate dehydrogenase SAV2309 from Staphylococcus aureus (strain Mu50 / ATCC 700699).